The chain runs to 210 residues: Cuticle collagen 2C (210 aa).

A disordered region spans residues 11-210 (CTGGQAGPPG…GVFFEDGTRR (200 aa)). Pro residues-rich tracts occupy residues 40–76 (PGRP…PGEP) and 88–103 (DAPP…PGPP). Low complexity predominate over residues 105–122 (KAGAPGAAGQPGANAPSE). Residues 123-144 (PLVPGPPGPPGPTGPEGPPGPN) show a composition bias toward pro residues. The span at 167-179 (HPGAPGNAGHPGQ) shows a compositional bias: low complexity.

Belongs to the cuticular collagen family.

Its function is as follows. Nematode cuticles are composed largely of collagen-like proteins. The cuticle functions both as an exoskeleton and as a barrier to protect the worm from its environment. In Haemonchus contortus (Barber pole worm), this protein is Cuticle collagen 2C (2C).